Consider the following 165-residue polypeptide: Small ribosomal subunit protein uS3m (165 aa).

Residues 1–30 (MNFLKKLLPQVATEVQQLSRSGFHTSSVCC) constitute a mitochondrion transit peptide.

It belongs to the universal ribosomal protein uS3 family. As to quaternary structure, component of the mitochondrial ribosome small subunit (28S) which comprises a 12S rRNA and about 30 distinct proteins.

It localises to the mitochondrion. The sequence is that of Small ribosomal subunit protein uS3m (mRpS24) from Drosophila melanogaster (Fruit fly).